A 332-amino-acid polypeptide reads, in one-letter code: NADH-quinone oxidoreductase subunit H (332 aa).

The next 9 membrane-spanning stretches (helical) occupy residues 8 to 28 (IIECILKIIVVLLIFSALAGF), 44 to 66 (IGPNYVGPYGLLQVVADGIKLFA), 78 to 98 (PIFILAPSIAAITAFIAMAPI), 120 to 140 (VGILFVLAVSSCGIYAPLLAG), 157 to 177 (IQFLSFEVITILSLLAPLMII), 196 to 216 (WLIFKQPLAFGLFIIAAYVEL), 245 to 265 (MFFIGEYANMFATAFILSLVF), 274 to 294 (FIPGGIAILLKVCFFIFLFMW), and 312 to 332 (WKIMLPLALLNVLITGCILLF).

It belongs to the complex I subunit 1 family. As to quaternary structure, NDH-1 is composed of 14 different subunits. Subunits NuoA, H, J, K, L, M, N constitute the membrane sector of the complex.

Its subcellular location is the cell inner membrane. It catalyses the reaction a quinone + NADH + 5 H(+)(in) = a quinol + NAD(+) + 4 H(+)(out). Its function is as follows. NDH-1 shuttles electrons from NADH, via FMN and iron-sulfur (Fe-S) centers, to quinones in the respiratory chain. The immediate electron acceptor for the enzyme in this species is believed to be ubiquinone. Couples the redox reaction to proton translocation (for every two electrons transferred, four hydrogen ions are translocated across the cytoplasmic membrane), and thus conserves the redox energy in a proton gradient. This subunit may bind ubiquinone. This is NADH-quinone oxidoreductase subunit H from Helicobacter hepaticus (strain ATCC 51449 / 3B1).